A 320-amino-acid chain; its full sequence is MATTKLGNTKSASRAINYAEERAEEKSGLNCDVDYAKSYFKQTRALYGKENGVQAHTVIQSFKPGEVTAKECNEIGLELAKKIAPDYQVAVYTHTDKDHYHNHIIINSVNLETGNKYQSNKEQRDFIKKANDQLCEERGLSVPEKSSEIRYTLAEQNMIDKDKRSWKNDIRMAVEETKDNAVAFEEFNTLLKEKGVEITRVTKNNVTYRHIEEDKKVRGNKLGDSYDKGVIENGFAIEKFRREREEEREYDEYADTFEVDWDAFAENSEDLRKRRIARTEETKQASNKIYIRDERTTGLERKGIAGNQVEFEKDDGGLSR.

In terms of biological role, this protein is probably required for relaxation complex formation and plasmid mobilization by conjugative plasmids. This Staphylococcus aureus protein is Protein rlx (rlx).